The chain runs to 70 residues: uncharacterized protein (70 aa).

Residues 40–70 (LHQQRTAHKVTSPPSQRPQNSETKSDSQNRS) are disordered. Residues 51 to 61 (SPPSQRPQNSE) are compositionally biased toward polar residues.

This is an uncharacterized protein from Bdellovibrio phage phiMH2K (Bacteriophage phiMH2K).